The sequence spans 179 residues: Large ribosomal subunit protein uL5 (179 aa).

The protein belongs to the universal ribosomal protein uL5 family. As to quaternary structure, part of the 50S ribosomal subunit; part of the 5S rRNA/L5/L18/L25 subcomplex. Contacts the 5S rRNA and the P site tRNA. Forms a bridge to the 30S subunit in the 70S ribosome.

Its function is as follows. This is one of the proteins that bind and probably mediate the attachment of the 5S RNA into the large ribosomal subunit, where it forms part of the central protuberance. In the 70S ribosome it contacts protein S13 of the 30S subunit (bridge B1b), connecting the 2 subunits; this bridge is implicated in subunit movement. Contacts the P site tRNA; the 5S rRNA and some of its associated proteins might help stabilize positioning of ribosome-bound tRNAs. This is Large ribosomal subunit protein uL5 from Carboxydothermus hydrogenoformans (strain ATCC BAA-161 / DSM 6008 / Z-2901).